Consider the following 679-residue polypeptide: Mitotic interactor and substrate of PLK1 (679 aa).

Phosphoserine; by CDK1; in vitro is present on Ser-78. 2 disordered regions span residues 151–182 (AVRK…TPLE) and 206–245 (ANKG…GHVV). Over residues 153–163 (RKSSTVATLQG) the composition is skewed to polar residues. Position 156 is a phosphoserine (Ser-156). A phosphothreonine; by CDK1; in vitro mark is found at Thr-164 and Thr-172. Residue Thr-179 is modified to Phosphothreonine. Ser-214 is subject to Phosphoserine; by CDK1; in vitro. At Thr-219 the chain carries Phosphothreonine. Thr-224 is modified (phosphothreonine; by CDK1; in vitro). A Phosphoserine; by CDK1; in vitro modification is found at Ser-284. Position 287 is a phosphothreonine; by CDK1; in vitro (Thr-287). Ser-348 carries the phosphoserine modification. A compositionally biased stretch (basic and acidic residues) spans 360-371 (QREEDHRREGLH). The disordered stretch occupies residues 360 to 419 (QREEDHRREGLHVGRASTPDWVSEGPQPGLRRALSSDSILSPAPDARAADPAPEVRKVNR). Thr-377 is modified (phosphothreonine; by CDK1; in vitro). Position 382 is a phosphoserine; by CDK1; in vitro (Ser-382). Phosphoserine; by PLK1; in vitro is present on residues Ser-394, Ser-395, and Ser-397. Position 400 is a phosphoserine (Ser-400). A compositionally biased stretch (low complexity) spans 401-411 (PAPDARAADPA). A Phosphoserine modification is found at Ser-430. The tract at residues 447–494 (PSSLSTAEAKAATSPKATMSPRHLSESSGKPLSTKQEASKPPRGCPQA) is disordered. Ser-471 bears the Phosphoserine; by PLK1; in vitro mark. Residues 472–482 (ESSGKPLSTKQ) show a composition bias toward polar residues. A phosphoserine mark is found at Ser-541 and Ser-543. The stretch at 545–569 (DLLERERESVLRREQEVAEERRNAL) forms a coiled coil. The segment covering 557–567 (REQEVAEERRN) has biased composition (basic and acidic residues). 2 disordered regions span residues 557-598 (REQE…ITGS) and 622-643 (DPVD…GINP). At Ser-575 the chain carries Phosphoserine; by CDK1; in vitro. Position 577 is a phosphothreonine (Thr-577). Phosphoserine; by PLK1; in vitro occurs at positions 582 and 586. The span at 583–593 (DQNSRSSSQAS) shows a compositional bias: low complexity. A Phosphoserine modification is found at Ser-675.

Belongs to the MISP family. In terms of assembly, associates with F-actin. Interacts with DCTN1; this interaction regulates DCTN1 distribution at the cell cortex. Interacts with PTK2/FAK and MAPRE1. In terms of processing, phosphorylated by CDK1 and PLK1. CDK1 is the priming kinase for PLK1 phosphorylation. Phosphorylation by PLK1 is required for proper spindle orientation at metaphase.

The protein localises to the cell junction. The protein resides in the focal adhesion. Its subcellular location is the cytoplasm. It is found in the cytoskeleton. It localises to the cell cortex. Its function is as follows. Plays a role in mitotic spindle orientation and mitotic progression. Regulates the distribution of dynactin at the cell cortex in a PLK1-dependent manner, thus stabilizing cortical and astral microtubule attachments required for proper mitotic spindle positioning. May link microtubules to the actin cytospkeleton and focal adhesions. May be required for directed cell migration and centrosome orientation. May also be necessary for proper stacking of the Golgi apparatus. In Homo sapiens (Human), this protein is Mitotic interactor and substrate of PLK1.